Here is a 473-residue protein sequence, read N- to C-terminus: Photosystem II CP43 reaction center protein (473 aa).

A propeptide spanning residues 1–14 (MKTLYSLRRFSHVE) is cleaved from the precursor. An N-acetylthreonine modification is found at threonine 15. Threonine 15 carries the phosphothreonine modification. 5 consecutive transmembrane segments (helical) span residues 69-93 (LFEVAHFGPEKPMYEQGLILLPHLA), 134-155 (LLGPEIIEESFPLFRYVWKDRN), 178-200 (KALYFGGVYDTWAPGGGDVRKIT), 255-275 (KPFAWARRALVWSGEAYLSYS), and 291-312 (WFNNTAYPSEFYGPTGPEASQA). A [CaMn4O5] cluster-binding site is contributed by glutamate 367. Residues 447–471 (RARAAAAGFEKGIDRDFEPVLSMTP) traverse the membrane as a helical segment.

It belongs to the PsbB/PsbC family. PsbC subfamily. As to quaternary structure, PSII is composed of 1 copy each of membrane proteins PsbA, PsbB, PsbC, PsbD, PsbE, PsbF, PsbH, PsbI, PsbJ, PsbK, PsbL, PsbM, PsbT, PsbX, PsbY, PsbZ, Psb30/Ycf12, at least 3 peripheral proteins of the oxygen-evolving complex and a large number of cofactors. It forms dimeric complexes. The cofactor is Binds multiple chlorophylls and provides some of the ligands for the Ca-4Mn-5O cluster of the oxygen-evolving complex. It may also provide a ligand for a Cl- that is required for oxygen evolution. PSII binds additional chlorophylls, carotenoids and specific lipids..

The protein localises to the plastid membrane. One of the components of the core complex of photosystem II (PSII). It binds chlorophyll and helps catalyze the primary light-induced photochemical processes of PSII. PSII is a light-driven water:plastoquinone oxidoreductase, using light energy to abstract electrons from H(2)O, generating O(2) and a proton gradient subsequently used for ATP formation. The protein is Photosystem II CP43 reaction center protein of Cuscuta obtusiflora (Peruvian dodder).